Here is a 694-residue protein sequence, read N- to C-terminus: MADLSKYRNIGIFAHVDAGKTTTTERILKLTGQIHKSGDTHDGTSVTDFMDQESERGITIQSAAVSCFWKDHRFNVIDTPGHVDFTVEVYRSLKVLDGGIGVFCGSGGVEPQSETNWRYANESGVARVIFVNKLDRMGADFFRVTNQVQKVLGATPLIMTLPIGREDEFVGVVDVLTKQAYVWDATGLPENYTIEDVPADMVDQVEEYHELLIETAVEQDDELLETYMEGVIPSIEDVKRCIRKGTRDLAFFPTYCGSAYKNKGMQLILDAVVDYLPSPTEVDPQPLMDEEGNENGEFAIVSTDLPFKALAFKIMDDRFGALTFVRIYSGKLNKGDTILNAFTGKTERVGRMVEMQADDRNELASAQAGDIIAIVGMKNVQTGHTLCDPKHPVTLEPMVFPTPVISIAVQPKDKGGNEKMGVAIGKMVAEDPSFQVETDEDSGETILKGMGELHLDIKVDILKRTYGVDLIVGQPQVAYRETITKEIEDSYTHKKQSGGSGQFGKIDYRIKPGEVASGFTFKSSVVGGNVPKEFWPAVEKGFKSMMGTGVLAGFPVLDVEVELFDGGFHAVDSSAIAFEIAAKGAFRQSIPKAGAQLLEPIMKVDVFTPEDHVGDVIGDLNRRRGMMKDQEPGLTGVRIKVDVPLSEMFGYIGSLRTMTSGRGQFSMEFSHYAPCPNNVAEAVIAAEKEKKAAK.

The tr-type G domain maps to 5–280 (SKYRNIGIFA…AVVDYLPSPT (276 aa)). GTP contacts are provided by residues 14-21 (AHVDAGKT), 78-82 (DTPGH), and 132-135 (NKLD).

Belongs to the TRAFAC class translation factor GTPase superfamily. Classic translation factor GTPase family. EF-G/EF-2 subfamily.

It is found in the cytoplasm. Functionally, catalyzes the GTP-dependent ribosomal translocation step during translation elongation. During this step, the ribosome changes from the pre-translocational (PRE) to the post-translocational (POST) state as the newly formed A-site-bound peptidyl-tRNA and P-site-bound deacylated tRNA move to the P and E sites, respectively. Catalyzes the coordinated movement of the two tRNA molecules, the mRNA and conformational changes in the ribosome. This chain is Elongation factor G 2, found in Pseudoalteromonas translucida (strain TAC 125).